The following is a 209-amino-acid chain: SAGA-associated factor 11 homolog 1 (209 aa).

The segment at 1–36 is disordered; the sequence is MSRTIVVKNPRTSGKDEDKAQIPSQDELPSGSSGAK. The SGF11-type zinc-finger motif lies at 120–141; it reads CCCPNCERMVAAVRFAPHLQTC. Residues 156–166 show a composition bias toward low complexity; that stretch reads LTVSSRSSSTS. The tract at residues 156 to 209 is disordered; the sequence is LTVSSRSSSTSTGGGQANEKSTDDEDWSLDSRPGKSTKNSRNKGSKKNQKNKLK. The span at 193–209 shows a compositional bias: basic residues; it reads KNSRNKGSKKNQKNKLK.

It belongs to the SGF11 family. As to quaternary structure, component of some SAGA transcription coactivator-HAT complexes, at least composed of Ada2b, not/nonstop, Pcaf/Gcn5, Sgf11 and Spt3. Within the SAGA complex, Sgf11, e(y)2, and not/nonstop form an additional subcomplex of SAGA called the DUB module (deubiquitination module). Interacts directly with not/nonstop. Interacts with the AMEX complex component xmas-2. Interacts with Cbp80; important for promoter recruitment of Sgf11 that is not associated with the DUB module.

It is found in the nucleus. It localises to the nucleoplasm. The protein resides in the cytoplasm. Component of the transcription regulatory histone acetylation (HAT) complex SAGA, a multiprotein complex that activates transcription by remodeling chromatin and mediating histone acetylation and deubiquitination. Within the SAGA complex, participates in a subcomplex that specifically deubiquitinates histone H2B. The SAGA complex is recruited to specific gene promoters by activators, where it is required for transcription. Required for nuclear receptor-mediated transactivation. Binds independently on SAGA to promoters in an RNA-dependent manner. Binds to mRNA and is essential for total mRNA export from the nucleus. Required to counteract heterochromatin silencing. Controls the development of neuronal connectivity in visual system by being required for accurate axon targeting in the optic lobe. Required for expression of ecdysone-induced genes such as br/broad. The chain is SAGA-associated factor 11 homolog 1 from Drosophila willistoni (Fruit fly).